Reading from the N-terminus, the 481-residue chain is UDP-glycosyltransferase 85A2 (481 aa).

Residues serine 303, 360–362 (CPQ), 377–385 (HCGWNSTLE), and 399–402 (FAEQ) contribute to the UDP-alpha-D-glucose site.

It belongs to the UDP-glycosyltransferase family. Expressed in roots, shoots, leaves and flowers.

This Arabidopsis thaliana (Mouse-ear cress) protein is UDP-glycosyltransferase 85A2 (UGT85A2).